Consider the following 719-residue polypeptide: Fatty acid oxidation complex subunit alpha (719 aa).

Residues 1–190 form an enoyl-CoA hydratase/isomerase region; it reads MVYQGNRITV…KLGLVDATVA (190 aa). D298 contacts substrate. Positions 313–719 are 3-hydroxyacyl-CoA dehydrogenase; that stretch reads HEINEAAVLG…AAGETFYATA (407 aa). NAD(+) contacts are provided by residues M326, D345, 402–404, K409, and S431; that span reads VVE. The active-site For 3-hydroxyacyl-CoA dehydrogenase activity is the H452. N455 is an NAD(+) binding site. N502 is a substrate binding site.

The protein in the N-terminal section; belongs to the enoyl-CoA hydratase/isomerase family. In the C-terminal section; belongs to the 3-hydroxyacyl-CoA dehydrogenase family. In terms of assembly, heterotetramer of two alpha chains (FadB) and two beta chains (FadA).

The enzyme catalyses a (3S)-3-hydroxyacyl-CoA + NAD(+) = a 3-oxoacyl-CoA + NADH + H(+). It carries out the reaction a (3S)-3-hydroxyacyl-CoA = a (2E)-enoyl-CoA + H2O. It catalyses the reaction a 4-saturated-(3S)-3-hydroxyacyl-CoA = a (3E)-enoyl-CoA + H2O. The catalysed reaction is (3S)-3-hydroxybutanoyl-CoA = (3R)-3-hydroxybutanoyl-CoA. The enzyme catalyses a (3Z)-enoyl-CoA = a 4-saturated (2E)-enoyl-CoA. It carries out the reaction a (3E)-enoyl-CoA = a 4-saturated (2E)-enoyl-CoA. Its pathway is lipid metabolism; fatty acid beta-oxidation. Its function is as follows. Involved in the aerobic and anaerobic degradation of long-chain fatty acids via beta-oxidation cycle. Catalyzes the formation of 3-oxoacyl-CoA from enoyl-CoA via L-3-hydroxyacyl-CoA. It can also use D-3-hydroxyacyl-CoA and cis-3-enoyl-CoA as substrate. The protein is Fatty acid oxidation complex subunit alpha of Psychrobacter arcticus (strain DSM 17307 / VKM B-2377 / 273-4).